The primary structure comprises 178 residues: CDP-diacylglycerol--glycerol-3-phosphate 3-phosphatidyltransferase (178 aa).

4 helical membrane passes run 28–48 (LSSLVLVLFLALMDFLDGFFA), 88–108 (LIFFLLLGRDITLIIGGIFLI), 125–145 (LFVSLSLLSVGILNVYDVNFL), and 147–167 (ILTNVLEIVSLILILVSWVDY).

This sequence belongs to the CDP-alcohol phosphatidyltransferase class-I family.

The protein localises to the cell membrane. The enzyme catalyses a CDP-1,2-diacyl-sn-glycerol + sn-glycerol 3-phosphate = a 1,2-diacyl-sn-glycero-3-phospho-(1'-sn-glycero-3'-phosphate) + CMP + H(+). It functions in the pathway phospholipid metabolism; phosphatidylglycerol biosynthesis; phosphatidylglycerol from CDP-diacylglycerol: step 1/2. In terms of biological role, this protein catalyzes the committed step to the synthesis of the acidic phospholipids. The chain is CDP-diacylglycerol--glycerol-3-phosphate 3-phosphatidyltransferase (pgsA) from Aquifex aeolicus (strain VF5).